A 1355-amino-acid chain; its full sequence is Ecdysone-induced protein 75B, isoform A (1355 aa).

Disordered stretches follow at residues 60 to 91 (QHQP…QQHS), 126 to 228 (RLKN…DSSY), 248 to 268 (ELEQ…EAKP), and 308 to 344 (ATQQ…NSSA). Positions 66-76 (QLHHQHQHQHQ) are enriched in basic residues. 2 stretches are compositionally biased toward low complexity: residues 77–91 (HQQQ…QQHS) and 143–179 (TLVK…QHQQ). Acidic residues predominate over residues 200-213 (SGIDEDSPNSDEDC). Polar residues-rich tracts occupy residues 218 to 228 (PAGTSLEDSSY) and 254 to 264 (TTGGSNAQQQV). 2 stretches are compositionally biased toward low complexity: residues 308 to 321 (ATQQ…QHQH) and 330 to 344 (DSNC…NSSA). The nuclear receptor DNA-binding region spans 384–474 (SQLNYLCQKF…VGMSRDAVRF (91 aa)). An NR C4-type; degenerate zinc finger spans residues 387-421 (NYLCQKFDEKLDTALSNSSANTGRNTPAVTANEDA). Residues 438–457 (CTKNQQCSILRINRNRCQYC) form an NR C4-type zinc finger. An NR LBD domain is found at 508–756 (DQPRLLAAVL…QQMWSMEDGN (249 aa)). Disordered regions lie at residues 780–821 (KSPL…SALA), 927–964 (LDSP…SVDD), 987–1007 (VSVS…KRQI), 1051–1117 (AEAD…SSHS), 1147–1260 (ENST…SNSA), and 1312–1344 (TVTA…NPGL). 5 stretches are compositionally biased toward low complexity: residues 797–809 (GSPS…GVSL), 948–960 (SSGG…SPRS), 987–1001 (VSVS…STSS), 1053–1098 (ADAS…AQSQ), and 1106–1117 (SSPKASMASSHS). 2 stretches are compositionally biased toward polar residues: residues 1149–1162 (STAA…VGNR) and 1174–1196 (AVQN…QRQQ). 3 stretches are compositionally biased toward low complexity: residues 1197–1233 (SVSP…SASS), 1242–1260 (STSN…SNSA), and 1315–1343 (ASNG…PNPG).

This sequence belongs to the nuclear hormone receptor family. NR1 subfamily.

The protein localises to the nucleus. Implicated in the regulation of ecdysone-triggered gene hierarchies. Probably plays a key role in mediating the regulation of the larval molt by 20-OH-ecdysone. The protein is Ecdysone-induced protein 75B, isoform A (Eip75B) of Drosophila melanogaster (Fruit fly).